A 173-amino-acid chain; its full sequence is Large ribosomal subunit protein bL9 (173 aa).

This sequence belongs to the bacterial ribosomal protein bL9 family.

In terms of biological role, binds to the 23S rRNA. The protein is Large ribosomal subunit protein bL9 of Rickettsia bellii (strain OSU 85-389).